The primary structure comprises 504 residues: UDP-N-acetylmuramoylalanine--D-glutamate ligase (504 aa).

132–138 (GTNGKTT) contacts ATP. The segment covering 286 to 295 (DRDASDEPAP) has biased composition (basic and acidic residues). A disordered region spans residues 286-305 (DRDASDEPAPKRRRKNEVAT).

It belongs to the MurCDEF family.

The protein localises to the cytoplasm. The catalysed reaction is UDP-N-acetyl-alpha-D-muramoyl-L-alanine + D-glutamate + ATP = UDP-N-acetyl-alpha-D-muramoyl-L-alanyl-D-glutamate + ADP + phosphate + H(+). The protein operates within cell wall biogenesis; peptidoglycan biosynthesis. Cell wall formation. Catalyzes the addition of glutamate to the nucleotide precursor UDP-N-acetylmuramoyl-L-alanine (UMA). This is UDP-N-acetylmuramoylalanine--D-glutamate ligase from Paraburkholderia xenovorans (strain LB400).